Reading from the N-terminus, the 249-residue chain is Protein obstructor-E (249 aa).

An N-terminal signal peptide occupies residues 1 to 21; it reads MAKILISALLCVAMFGSMALG. A Chitin-binding type-2 1 domain is found at 22–80; that stretch reads SPECPTPNGRFASGDQCDSYTECQDGTPVEKLCPDGLLFHQRTKATGECTYAPYSTCKE. A disulfide bond links Cys-54 and Cys-70. N-linked (GlcNAc...) asparagine glycosylation occurs at Asn-88. 2 Chitin-binding type-2 domains span residues 90–148 and 170–227; these read TEEC…SCNA and VDVS…ECYA. 2 disulfide bridges follow: Cys-124–Cys-137 and Cys-203–Cys-216.

In terms of tissue distribution, uniformly expressed throughout the cuticle of third instar larva.

It localises to the secreted. It is found in the extracellular space. Its subcellular location is the extracellular matrix. Chitin-binding protein that is important for the longitudinal contraction and lateral expansion of the larval cuticle during its conversion into the oval-shaped puparium case. Essential for survival to the second instar larval stage. Confers the orientated contractility and expandability of the larval cuticle by regulating the arrangement of chitin and the formation of supracellular ridges on the cuticle of third instar larvae. Essential for determining pupal body shape; required for the orientated shape change of the cuticle during metamorphosis which involves changes in the morphology of the supracellular ridges. Its function is as follows. Mainly involved in regulating pupal shape. In terms of biological role, mainly involved in larvae survival, possibly by maintaining the normal morphology of the larval hindgut during development. In Drosophila melanogaster (Fruit fly), this protein is Protein obstructor-E.